Reading from the N-terminus, the 195-residue chain is FMN-dependent NADH:quinone oxidoreductase (195 aa).

FMN-binding positions include Ser10, 16–18 (SQS), 91–94 (MYNF), and 135–138 (TRGG).

Belongs to the azoreductase type 1 family. Homodimer. FMN is required as a cofactor.

The catalysed reaction is 2 a quinone + NADH + H(+) = 2 a 1,4-benzosemiquinone + NAD(+). It carries out the reaction N,N-dimethyl-1,4-phenylenediamine + anthranilate + 2 NAD(+) = 2-(4-dimethylaminophenyl)diazenylbenzoate + 2 NADH + 2 H(+). Quinone reductase that provides resistance to thiol-specific stress caused by electrophilic quinones. Functionally, also exhibits azoreductase activity. Catalyzes the reductive cleavage of the azo bond in aromatic azo compounds to the corresponding amines. The protein is FMN-dependent NADH:quinone oxidoreductase of Vibrio vulnificus (strain YJ016).